Consider the following 313-residue polypeptide: Olfactory receptor 1D2 (313 aa).

Residues 1–25 (MDGGNQSEGSEFLLLGMSESPEQQR) are Extracellular-facing. Asn5 is a glycosylation site (N-linked (GlcNAc...) asparagine). The helical transmembrane segment at 26-49 (ILFWMFLSMYLVTVLGNVLIILAI) threads the bilayer. The Cytoplasmic portion of the chain corresponds to 50–57 (SSDSRLHT). A helical transmembrane segment spans residues 58 to 79 (PMYFFLANLSFTDLFFVTNTIP). The Extracellular portion of the chain corresponds to 80–100 (KMLVNLQSQDKAISYAGCLTQ). Cys97 and Cys189 are joined by a disulfide. A helical transmembrane segment spans residues 101 to 120 (LYFLLSLVTLDNLILAVMAY). Over 121–139 (DRYVAICCPLHYVTAMSPR) the chain is Cytoplasmic. A helical transmembrane segment spans residues 140–158 (LCILLLSLCWVFSVLYGLI). The Extracellular segment spans residues 159-196 (HTLLMTRVTFCGSRKIHYLFCEMYFLLRLACSNIQINH). Residue Asn195 is glycosylated (N-linked (GlcNAc...) asparagine). Residues 197 to 219 (TVLXATGCFIFLIPLGFMIXSYA) form a helical membrane-spanning segment. At 220-236 (RIVRAILRIPSATGKYK) the chain is on the cytoplasmic side. Residues 237–259 (AFSTCASHLAVVSLFYGTLGMVY) traverse the membrane as a helical segment. The Extracellular segment spans residues 260 to 271 (LQPLQTYSTKDS). The helical transmembrane segment at 272 to 291 (VATVMYAVVTPMMNPFIYSL) threads the bilayer. Over 292-313 (RNKDIHGALGRLLQGKAFQKLT) the chain is Cytoplasmic.

The protein belongs to the G-protein coupled receptor 1 family.

The protein localises to the cell membrane. Odorant receptor. This is Olfactory receptor 1D2 (OR1D2) from Pongo pygmaeus (Bornean orangutan).